The chain runs to 383 residues: Aquaporin-5 (383 aa).

The Cytoplasmic portion of the chain corresponds to 1–46 (MSVTTLNGQPTLNISGPGQTALSRLDPLKKVFTKFFSSIPQKVRGH). A helical transmembrane segment spans residues 47–67 (VVAVIGELIGTTAFLFIAFSA). The Extracellular portion of the chain corresponds to 68 to 93 (AEVALASANDNKGDKVSYETKSISTT). A helical membrane pass occupies residues 94 to 114 (QILFIAFGAGISLVVNAWTFF). A topological domain (cytoplasmic) is located at residue Arg-115. The chain crosses the membrane as a helical span at residues 116-136 (ISGGLFDPAVSIALFFVGAID). Positions 122–124 (DPA) match the NPA 1 motif. Residues 137–140 (LTRC) lie on the Extracellular side of the membrane. The chain crosses the membrane as a helical span at residues 141–161 (VLLCIAQCLGAIAASAMAYGL). Topologically, residues 162–180 (YHGGLHTATTLKPGMSPAQ) are cytoplasmic. Residues 181–201 (GVIVEMILTCQLCFTVLMLAA) traverse the membrane as a helical segment. The Extracellular portion of the chain corresponds to 202–207 (EKHEAT). Residues 208-228 (FLAPLGIGLSVFIGELAGVFW) traverse the membrane as a helical segment. Over 229–252 (TGGSMNPARSLGPAVVTLSFPSYH) the chain is Cytoplasmic. Residues 234–236 (NPA) carry the NPA 2 motif. The chain crosses the membrane as a helical span at residues 253-273 (WIYWVGPIAGAGLASIIYKLI). Residues 274–383 (KALEYETAQL…DGFFGEMYAD (110 aa)) lie on the Extracellular side of the membrane. Positions 332–349 (ARKSSSLVPTKSTKSGNS) are enriched in polar residues. The disordered stretch occupies residues 332 to 383 (ARKSSSLVPTKSTKSGNSEVKKTETVVEEPAKTQPKPAPAADDGFFGEMYAD). Over residues 350 to 362 (EVKKTETVVEEPA) the composition is skewed to basic and acidic residues. A compositionally biased stretch (low complexity) spans 363-372 (KTQPKPAPAA).

Belongs to the MIP/aquaporin (TC 1.A.8) family.

The protein localises to the membrane. The enzyme catalyses H2O(in) = H2O(out). Its function is as follows. Water channel required to facilitate the transport of water across membranes. May play a role in the vegetative growth. This chain is Aquaporin-5, found in Botryotinia fuckeliana (strain B05.10) (Noble rot fungus).